We begin with the raw amino-acid sequence, 604 residues long: uncharacterized protein (604 aa).

The segment at 239-259 (ELNSPQELNDPQELNNSQDLN) is disordered.

This is an uncharacterized protein from Escherichia coli (strain K12).